The primary structure comprises 592 residues: Aspartate--tRNA(Asp/Asn) ligase (592 aa).

L-aspartate is bound at residue Glu-175. Residues 199–202 (QLFK) are aspartate. Position 221 (Arg-221) interacts with L-aspartate. ATP is bound by residues 221–223 (RDE) and Gln-230. His-447 serves as a coordination point for L-aspartate. Glu-481 provides a ligand contact to ATP. Residue Arg-488 participates in L-aspartate binding. 533–536 (GIDR) is an ATP binding site.

The protein belongs to the class-II aminoacyl-tRNA synthetase family. Type 1 subfamily. As to quaternary structure, homodimer.

Its subcellular location is the cytoplasm. The enzyme catalyses tRNA(Asx) + L-aspartate + ATP = L-aspartyl-tRNA(Asx) + AMP + diphosphate. Functionally, aspartyl-tRNA synthetase with relaxed tRNA specificity since it is able to aspartylate not only its cognate tRNA(Asp) but also tRNA(Asn). Reaction proceeds in two steps: L-aspartate is first activated by ATP to form Asp-AMP and then transferred to the acceptor end of tRNA(Asp/Asn). This chain is Aspartate--tRNA(Asp/Asn) ligase, found in Dictyoglomus turgidum (strain DSM 6724 / Z-1310).